The primary structure comprises 370 residues: Putative agmatine deiminase (370 aa).

The Amidino-cysteine intermediate role is filled by C361.

The protein belongs to the agmatine deiminase family.

It catalyses the reaction agmatine + H2O = N-carbamoylputrescine + NH4(+). The chain is Putative agmatine deiminase from Shewanella baltica (strain OS223).